Consider the following 835-residue polypeptide: Leucine--tRNA ligase (835 aa).

A 'HIGH' region motif is present at residues 36–46; sequence PYPSGKIHVGH. The short motif at 602 to 606 is the 'KMSKS' region element; it reads KMSKS. An ATP-binding site is contributed by Lys605.

This sequence belongs to the class-I aminoacyl-tRNA synthetase family.

Its subcellular location is the cytoplasm. It catalyses the reaction tRNA(Leu) + L-leucine + ATP = L-leucyl-tRNA(Leu) + AMP + diphosphate. The chain is Leucine--tRNA ligase from Rickettsia peacockii (strain Rustic).